The chain runs to 227 residues: Thiamine-phosphate synthase (227 aa).

4-amino-2-methyl-5-(diphosphooxymethyl)pyrimidine is bound by residues 50–54 (QFRQK) and D82. 2 residues coordinate Mg(2+): D83 and D102. 4-amino-2-methyl-5-(diphosphooxymethyl)pyrimidine is bound at residue T121. 2-[(2R,5Z)-2-carboxy-4-methylthiazol-5(2H)-ylidene]ethyl phosphate is bound at residue 147-149 (TTS). Position 150 (K150) interacts with 4-amino-2-methyl-5-(diphosphooxymethyl)pyrimidine. Residues G178 and 198 to 199 (LS) contribute to the 2-[(2R,5Z)-2-carboxy-4-methylthiazol-5(2H)-ylidene]ethyl phosphate site.

Belongs to the thiamine-phosphate synthase family. Mg(2+) serves as cofactor.

It carries out the reaction 2-[(2R,5Z)-2-carboxy-4-methylthiazol-5(2H)-ylidene]ethyl phosphate + 4-amino-2-methyl-5-(diphosphooxymethyl)pyrimidine + 2 H(+) = thiamine phosphate + CO2 + diphosphate. The enzyme catalyses 2-(2-carboxy-4-methylthiazol-5-yl)ethyl phosphate + 4-amino-2-methyl-5-(diphosphooxymethyl)pyrimidine + 2 H(+) = thiamine phosphate + CO2 + diphosphate. It catalyses the reaction 4-methyl-5-(2-phosphooxyethyl)-thiazole + 4-amino-2-methyl-5-(diphosphooxymethyl)pyrimidine + H(+) = thiamine phosphate + diphosphate. It functions in the pathway cofactor biosynthesis; thiamine diphosphate biosynthesis; thiamine phosphate from 4-amino-2-methyl-5-diphosphomethylpyrimidine and 4-methyl-5-(2-phosphoethyl)-thiazole: step 1/1. In terms of biological role, condenses 4-methyl-5-(beta-hydroxyethyl)thiazole monophosphate (THZ-P) and 2-methyl-4-amino-5-hydroxymethyl pyrimidine pyrophosphate (HMP-PP) to form thiamine monophosphate (TMP). This chain is Thiamine-phosphate synthase, found in Salinibacter ruber (strain DSM 13855 / M31).